We begin with the raw amino-acid sequence, 347 residues long: CRISPR-associated endonuclease Cas1 4 (347 aa).

Positions 1 to 21 (MNIENEVHIENASESKREPKP) are enriched in basic and acidic residues. The segment at 1–25 (MNIENEVHIENASESKREPKPPEGL) is disordered. Residues Glu-176, His-241, and Glu-256 each coordinate Mn(2+).

Belongs to the CRISPR-associated endonuclease Cas1 family. Homodimer, forms a heterotetramer with a Cas2 homodimer. Requires Mg(2+) as cofactor. Mn(2+) is required as a cofactor.

Its function is as follows. CRISPR (clustered regularly interspaced short palindromic repeat), is an adaptive immune system that provides protection against mobile genetic elements (viruses, transposable elements and conjugative plasmids). CRISPR clusters contain spacers, sequences complementary to antecedent mobile elements, and target invading nucleic acids. CRISPR clusters are transcribed and processed into CRISPR RNA (crRNA). Acts as a dsDNA endonuclease. Involved in the integration of spacer DNA into the CRISPR cassette. This is CRISPR-associated endonuclease Cas1 4 from Methanospirillum hungatei JF-1 (strain ATCC 27890 / DSM 864 / NBRC 100397 / JF-1).